The following is a 207-amino-acid chain: MADS-box protein AGL71 (207 aa).

Residues 1–61 (MVRGKIEIKK…GRLHEYSSSQ (61 aa)) enclose the MADS-box domain. Positions 88–178 (LQELKMEIDR…LEEVNMHHSS (91 aa)) constitute a K-box domain.

Its subcellular location is the nucleus. MADS-box transcription factor that acts with AGL42 and AGL72 in the control of flowering time. Promotes flowering at the shoot apical and axillary meristems. Seems to act through a gibberellin-dependent pathway. Interacts genetically with SOC1 and its expression is directly regulated by SOC1. The chain is MADS-box protein AGL71 (AGL71) from Arabidopsis thaliana (Mouse-ear cress).